We begin with the raw amino-acid sequence, 438 residues long: 3-phosphoshikimate 1-carboxyvinyltransferase (438 aa).

Lys-21 contributes to the phosphoenolpyruvate binding site. Residues Ser-22 and Arg-26 each coordinate 3-phosphoshikimate. A phosphoenolpyruvate region spans residues 93 to 96; the sequence is NSGT. Phosphoenolpyruvate is bound by residues Gly-95, Thr-96, and Arg-123. Residues Ser-167, Ala-168, Gln-169, Asp-315, and Lys-342 each contribute to the 3-phosphoshikimate site. Gln-169 provides a ligand contact to phosphoenolpyruvate. Asp-315 (proton acceptor) is an active-site residue. Arg-346 and Arg-387 together coordinate phosphoenolpyruvate.

Belongs to the EPSP synthase family. Homodimer or homotetramer.

It localises to the cytoplasm. The catalysed reaction is 3-phosphoshikimate + phosphoenolpyruvate = 5-O-(1-carboxyvinyl)-3-phosphoshikimate + phosphate. It functions in the pathway metabolic intermediate biosynthesis; chorismate biosynthesis; chorismate from D-erythrose 4-phosphate and phosphoenolpyruvate: step 6/7. Catalyzes the transfer of the enolpyruvyl moiety of phosphoenolpyruvate (PEP) to the 5-hydroxyl of shikimate-3-phosphate (S3P) to produce enolpyruvyl shikimate-3-phosphate and inorganic phosphate. In Coxiella burnetii (strain RSA 493 / Nine Mile phase I), this protein is 3-phosphoshikimate 1-carboxyvinyltransferase.